Here is a 758-residue protein sequence, read N- to C-terminus: G-protein alpha subunit activating protein gbas-1 (758 aa).

Positions 30 to 48 (LDEVDNADFEREDDEEEVL) are enriched in acidic residues. Residues 30-70 (LDEVDNADFEREDDEEEVLSEPSESPYTSTPKSSKRVNKTR) are disordered. Residues 49-61 (SEPSESPYTSTPK) are compositionally biased toward low complexity. Residues 653-666 (ETVTVEEFLMNSYS) carry the GBA motif. Positions 668-690 (AAPSTSTAPAPPKAPVTAPPAPQ) are disordered. Residues 676 to 689 (PAPPKAPVTAPPAP) are compositionally biased toward pro residues.

As to quaternary structure, interacts (via GBA motif) with guanine nucleotide-binding protein G(o) subunit alpha goa-1 (in GDP-bound form); the interaction leads to activation of goa-1. Expressed in some neurons including the head and tail neurons, HSN and VC, in a subset of glial cells, in the distal tips cells and in the intestine.

Its function is as follows. Acts as a non-receptor guanine nucleotide exchange factor which binds to and activates G-protein alpha subunit goa-1. This Caenorhabditis elegans protein is G-protein alpha subunit activating protein gbas-1.